The primary structure comprises 706 residues: Elongation factor G (706 aa).

One can recognise a tr-type G domain in the interval 8–297; sequence ERVRNIGIAA…AVIDYLPAPT (290 aa). GTP-binding positions include 17–24, 96–100, and 150–153; these read AHIDAGKT, DTPGH, and NKMD.

The protein belongs to the TRAFAC class translation factor GTPase superfamily. Classic translation factor GTPase family. EF-G/EF-2 subfamily.

It localises to the cytoplasm. Functionally, catalyzes the GTP-dependent ribosomal translocation step during translation elongation. During this step, the ribosome changes from the pre-translocational (PRE) to the post-translocational (POST) state as the newly formed A-site-bound peptidyl-tRNA and P-site-bound deacylated tRNA move to the P and E sites, respectively. Catalyzes the coordinated movement of the two tRNA molecules, the mRNA and conformational changes in the ribosome. The chain is Elongation factor G from Cyanothece sp. (strain PCC 7425 / ATCC 29141).